Consider the following 363-residue polypeptide: uncharacterized protein (363 aa).

4 consecutive transmembrane segments (helical) span residues 34–54, 60–80, 91–111, and 112–132; these read YVYDIALIAISILCIVSIILW, LALFAIAPALAIGALGVTLLV, EIADTVAAVSLPFILTGTAAG, and LMFSAIAVGGGAVILANPLFL. The segment covering 232–245 has biased composition (polar residues); that stretch reads SSTTTHSTDSEQIL. The tract at residues 232 to 363 is disordered; sequence SSTTTHSTDS…SSQKKKPSRK (132 aa). Composition is skewed to low complexity over residues 246–268 and 275–285; these read TSVSPQSSDTESSSSSSFHTPPN and DSNSSDSSSSS. Residues 322-342 show a composition bias toward basic and acidic residues; it reads SRSERNAQHHRNKDQEQRQDS.

The protein belongs to the chlamydial CPn_0443/CT_005/TC_0273 family.

It localises to the cell membrane. This is an uncharacterized protein from Chlamydia trachomatis serovar D (strain ATCC VR-885 / DSM 19411 / UW-3/Cx).